A 71-amino-acid polypeptide reads, in one-letter code: DNA-directed RNA polymerase subunit epsilon (71 aa).

The protein belongs to the RNA polymerase subunit epsilon family. RNAP is composed of a core of 2 alpha, a beta and a beta' subunit. The core is associated with a delta subunit, and at least one of epsilon or omega. When a sigma factor is associated with the core the holoenzyme is formed, which can initiate transcription.

The catalysed reaction is RNA(n) + a ribonucleoside 5'-triphosphate = RNA(n+1) + diphosphate. In terms of biological role, a non-essential component of RNA polymerase (RNAP). In Staphylococcus saprophyticus subsp. saprophyticus (strain ATCC 15305 / DSM 20229 / NCIMB 8711 / NCTC 7292 / S-41), this protein is DNA-directed RNA polymerase subunit epsilon.